An 861-amino-acid polypeptide reads, in one-letter code: MAEERFDFREAEPRWQRRWDEEGIYKVERDLSRPKYYALAMFPYPSGKLHMGHVRNYTIVDVIARYRRMKGYNVLHPMGFDSFGMPAENAAIQHGANPAVWTRENIAEMTAQLKQMGYSYDWSRAVYTYREDYYRWTQWLFLQFYKKGLAYKKTAPVNWCPSCQTVLANEQVEDGRCWRCDSVVTKKDLAQWFFRITQYADELLEDLKLLEGGWPEQVRIMQQNWIGRSEGARVEFTLEATGDKIPIFTTRPDTIYGVTFMVVAPEHPIVEKICTSGLIPEERVAAIRAFQEKMKHLSEIARTSTEAEKEGLYTGLDVINPFNGEKAQLWIANYVLMDYGTGAVMGVPAHDQRDFEFAQKYGLPVKVVIQNPEGTLRAEEMTAAYVEPGIMVNSGPFDGTPNLEGIPKVIAYAEEQGFGQKTVSYRLRDWLISRQRAWGAPIPIVYCDKCGTVPVPEKDLPVRLPDDLDFTGEGGSPLARHEGFVNTTCPQCGGPARRETDTMDTFVCSSWYFLRYTDPQNAERPWNREDVDYWMPVDQYVGGIEHAVLHLLYARFFTKVLRDMGLVKVDEPFARLLTQGMVLKDGSKMSKSKGNTVSPEEMIAKYGADAVRLFIMFAAPPERDLDWSDAGIEGAARFVNRFYRMVVSALPAYQHARSLLPINPADPASVMGALSEAEIAEGLAKAAPNLTAEDRELRRVIHATVKRITADLHDRFAFNTAISGLMEMTNAIYAYREKQHAEQNTSALVLAEAVQKAVLIIAPFCPHLADELWSRMGHPRSIHLEPWPAYDEEVAKADTVEIVVQINGRVRDRLEVPAGISAAEMEAVAMASEKVQALVAGKQIVKVVPVPGKLVNIVVKG.

Positions 43–53 match the 'HIGH' region motif; the sequence is PYPSGKLHMGH. The 'KMSKS' region motif lies at 588-592; the sequence is KMSKS. Residue Lys591 coordinates ATP.

Belongs to the class-I aminoacyl-tRNA synthetase family.

It localises to the cytoplasm. It carries out the reaction tRNA(Leu) + L-leucine + ATP = L-leucyl-tRNA(Leu) + AMP + diphosphate. In Symbiobacterium thermophilum (strain DSM 24528 / JCM 14929 / IAM 14863 / T), this protein is Leucine--tRNA ligase.